The sequence spans 122 residues: Large ribosomal subunit protein bL20 (122 aa).

This sequence belongs to the bacterial ribosomal protein bL20 family.

Functionally, binds directly to 23S ribosomal RNA and is necessary for the in vitro assembly process of the 50S ribosomal subunit. It is not involved in the protein synthesizing functions of that subunit. This chain is Large ribosomal subunit protein bL20, found in Saccharopolyspora erythraea (strain ATCC 11635 / DSM 40517 / JCM 4748 / NBRC 13426 / NCIMB 8594 / NRRL 2338).